Consider the following 220-residue polypeptide: uncharacterized protein (220 aa).

This is an uncharacterized protein from Borreliella burgdorferi (strain ATCC 35210 / DSM 4680 / CIP 102532 / B31) (Borrelia burgdorferi).